A 412-amino-acid chain; its full sequence is Na(+)/H(+) antiporter NhaA 1 (412 aa).

Transmembrane regions (helical) follow at residues 34-54 (VGGM…NSPA), 75-95 (LTIG…VAGL), 114-134 (LPVV…FAIG), 142-162 (AAWA…LSLT), 183-203 (LGAI…LALL), 234-254 (WIAV…LGLL), 282-302 (LIVP…EALV), 309-329 (VAIA…FGSS), 349-369 (LSAL…IAEL), and 379-399 (AKAA…VMLL).

The protein belongs to the NhaA Na(+)/H(+) (TC 2.A.33) antiporter family.

The protein localises to the cell membrane. It carries out the reaction Na(+)(in) + 2 H(+)(out) = Na(+)(out) + 2 H(+)(in). Na(+)/H(+) antiporter that extrudes sodium in exchange for external protons. The protein is Na(+)/H(+) antiporter NhaA 1 of Saccharopolyspora erythraea (strain ATCC 11635 / DSM 40517 / JCM 4748 / NBRC 13426 / NCIMB 8594 / NRRL 2338).